The sequence spans 327 residues: MQFIDQANIILKAGKGGNGIVSFRREKFVPAGGPSGGNGGRGGSVILMADNNLQTLLDFKFKREIIAEDGCKGGPNKRSGASGEDTILKVPCGTEIRDIKTGIILGDLTKHKQSLTIAIGGRGGHGNAYYLSNQNRAPESFTEGKDGEIWEVQLELKLLAEVGIIGLPNAGKSTLISVVSSARPKIANYPFTTLIPNLGVVRKIDGNGCLFADIPGLISGAADGVGLGHDFLRHIQRTKILVHLIDAIAENPLHDFEIIEQELKKYGKGLLDKERIIVLNKIELVDDDYLKIISKKLEDLSKKKVLVISSSLKKGLSSLLSEVWKRI.

Residues 1–159 (MQFIDQANII…WEVQLELKLL (159 aa)) enclose the Obg domain. Residues 160–327 (AEVGIIGLPN…SLLSEVWKRI (168 aa)) enclose the OBG-type G domain. Residues 166–173 (GLPNAGKS), 191–195 (FTTLI), 213–216 (DIPG), 280–283 (NKIE), and 309–311 (SSS) each bind ATP. Mg(2+) is bound by residues Ser-173 and Thr-193.

Belongs to the TRAFAC class OBG-HflX-like GTPase superfamily. OBG GTPase family. In terms of assembly, monomer. Mg(2+) is required as a cofactor.

Its subcellular location is the cytoplasm. Its function is as follows. An essential GTPase which binds GTP, GDP and possibly (p)ppGpp with moderate affinity, with high nucleotide exchange rates and a fairly low GTP hydrolysis rate. Plays a role in control of the cell cycle, stress response, ribosome biogenesis and in those bacteria that undergo differentiation, in morphogenesis control. The polypeptide is GTPase Obg (Prochlorococcus marinus (strain AS9601)).